An 848-amino-acid chain; its full sequence is Aryl hydrocarbon receptor (848 aa).

Met1 carries the post-translational modification N-acetylmethionine. Positions 1–10 (MNSSSANITY) are excised as a propeptide. Positions 1 to 10 (MNSSSANITY) are enriched in polar residues. The segment at 1-39 (MNSSSANITYASRKRRKPVQKTVKPIPAEGIKSNPSKRH) is disordered. Short sequence motifs (nuclear localization signal) lie at residues 13–16 (RKRR) and 37–42 (KRHRDR). Residues 27–80 (PAEGIKSNPSKRHRDRLNTELDRLASLLPFPQDVINKLDKLSVLRLSVSYLRAK) form the bHLH domain. A DNA-binding region spans residues 38–66 (RHRDRLNTELDRLASLLPFPQDVINKLDK). Required for maintaining the overall integrity of the AHR:ARNT heterodimer and its transcriptional activity regions lie at residues 50-82 (LASLLPFPQDVINKLDKLSVLRLSVSYLRAKSF), 118-126 (LLQALNGFV), and 266-268 (FAI). Residues 64–72 (LDKLSVLRL) carry the Nuclear export signal motif. One can recognise a PAS 1 domain in the interval 111 to 181 (NLQEGEFLLQ…RQLHWALNPS (71 aa)). The 68-residue stretch at 275-342 (PSILEIRTKN…CAESHIRMIK (68 aa)) folds into the PAS 2 domain. The PAC domain maps to 348–386 (MIVFRLLTKNNRWTWVQSNARLLYKNGRPDYIIVTQRPL). The segment at 824–848 (TTHLQPLHHPSEARPFPDLTSSGFL) is disordered.

In terms of assembly, homodimer. Heterodimer; efficient DNA binding requires dimerization with another bHLH protein. Interacts with ARNT; the heterodimer ARNT:AHR binds to core DNA sequence 5'-TGCGTG-3' within the dioxin response element (DRE) of target gene promoters and activates their transcription. Binds MYBBP1A. Interacts with coactivators including SRC-1, RIP140 and NOCA7, and with the corepressor SMRT. Interacts with NEDD8 and IVNS1ABP. Interacts with BMAL1. Interacts with HSP90AB1. Interacts with TIPARP; leading to mono-ADP-ribosylation of AHR and subsequent inhibition of AHR. In terms of processing, mono-ADP-ribosylated, leading to inhibit transcription activator activity of AHR. Expressed in all tissues tested including blood, brain, heart, kidney, liver, lung, pancreas and skeletal muscle. Expressed in retinal photoreceptors.

It is found in the cytoplasm. Its subcellular location is the nucleus. In terms of biological role, ligand-activated transcription factor that enables cells to adapt to changing conditions by sensing compounds from the environment, diet, microbiome and cellular metabolism, and which plays important roles in development, immunity and cancer. Upon ligand binding, translocates into the nucleus, where it heterodimerizes with ARNT and induces transcription by binding to xenobiotic response elements (XRE). Regulates a variety of biological processes, including angiogenesis, hematopoiesis, drug and lipid metabolism, cell motility and immune modulation. Xenobiotics can act as ligands: upon xenobiotic-binding, activates the expression of multiple phase I and II xenobiotic chemical metabolizing enzyme genes (such as the CYP1A1 gene). Mediates biochemical and toxic effects of halogenated aromatic hydrocarbons. Next to xenobiotics, natural ligands derived from plants, microbiota, and endogenous metabolism are potent AHR agonists. Tryptophan (Trp) derivatives constitute an important class of endogenous AHR ligands. Acts as a negative regulator of anti-tumor immunity: indoles and kynurenic acid generated by Trp catabolism act as ligand and activate AHR, thereby promoting AHR-driven cancer cell motility and suppressing adaptive immunity. Regulates the circadian clock by inhibiting the basal and circadian expression of the core circadian component PER1. Inhibits PER1 by repressing the CLOCK-BMAL1 heterodimer mediated transcriptional activation of PER1. The heterodimer ARNT:AHR binds to core DNA sequence 5'-TGCGTG-3' within the dioxin response element (DRE) of target gene promoters and activates their transcription. The protein is Aryl hydrocarbon receptor of Homo sapiens (Human).